A 418-amino-acid polypeptide reads, in one-letter code: Light-independent protochlorophyllide reductase subunit N (418 aa).

[4Fe-4S] cluster-binding residues include Cys-17, Cys-42, and Cys-103.

Belongs to the BchN/ChlN family. Protochlorophyllide reductase is composed of three subunits; ChlL, ChlN and ChlB. Forms a heterotetramer of two ChlB and two ChlN subunits. It depends on [4Fe-4S] cluster as a cofactor.

It catalyses the reaction chlorophyllide a + oxidized 2[4Fe-4S]-[ferredoxin] + 2 ADP + 2 phosphate = protochlorophyllide a + reduced 2[4Fe-4S]-[ferredoxin] + 2 ATP + 2 H2O. It functions in the pathway porphyrin-containing compound metabolism; chlorophyll biosynthesis (light-independent). Component of the dark-operative protochlorophyllide reductase (DPOR) that uses Mg-ATP and reduced ferredoxin to reduce ring D of protochlorophyllide (Pchlide) to form chlorophyllide a (Chlide). This reaction is light-independent. The NB-protein (ChlN-ChlB) is the catalytic component of the complex. This is Light-independent protochlorophyllide reductase subunit N from Prochlorococcus marinus (strain MIT 9312).